We begin with the raw amino-acid sequence, 236 residues long: 1-(5-phosphoribosyl)-5-[(5-phosphoribosylamino)methylideneamino] imidazole-4-carboxamide isomerase (236 aa).

Catalysis depends on Asp8, which acts as the Proton acceptor. Asp127 functions as the Proton donor in the catalytic mechanism.

The protein belongs to the HisA/HisF family.

The protein resides in the cytoplasm. The enzyme catalyses 1-(5-phospho-beta-D-ribosyl)-5-[(5-phospho-beta-D-ribosylamino)methylideneamino]imidazole-4-carboxamide = 5-[(5-phospho-1-deoxy-D-ribulos-1-ylimino)methylamino]-1-(5-phospho-beta-D-ribosyl)imidazole-4-carboxamide. The protein operates within amino-acid biosynthesis; L-histidine biosynthesis; L-histidine from 5-phospho-alpha-D-ribose 1-diphosphate: step 4/9. The chain is 1-(5-phosphoribosyl)-5-[(5-phosphoribosylamino)methylideneamino] imidazole-4-carboxamide isomerase from Campylobacter hominis (strain ATCC BAA-381 / DSM 21671 / CCUG 45161 / LMG 19568 / NCTC 13146 / CH001A).